We begin with the raw amino-acid sequence, 124 residues long: Large ribosomal subunit protein bL12 (124 aa).

The protein belongs to the bacterial ribosomal protein bL12 family. In terms of assembly, homodimer. Part of the ribosomal stalk of the 50S ribosomal subunit. Forms a multimeric L10(L12)X complex, where L10 forms an elongated spine to which 2 to 4 L12 dimers bind in a sequential fashion. Binds GTP-bound translation factors.

Its function is as follows. Forms part of the ribosomal stalk which helps the ribosome interact with GTP-bound translation factors. Is thus essential for accurate translation. The polypeptide is Large ribosomal subunit protein bL12 (Campylobacter fetus subsp. fetus (strain 82-40)).